A 504-amino-acid polypeptide reads, in one-letter code: Sodium-coupled neutral amino acid transporter 3 (504 aa).

Ser52 is subject to Phosphoserine; by PKC. A glycan (N-linked (GlcNAc...) asparagine) is linked at Asn73. 5 helical membrane passes run 82–102 (GILG…LFLL), 105–125 (VALL…IVGI), 143–163 (AAAL…LYII), 186–206 (MDGN…LALM), and 212–232 (LGYS…AVIY). The cysteines at positions 239 and 275 are disulfide-linked. Asn247 and Asn251 each carry an N-linked (GlcNAc...) asparagine glycan. The chain crosses the membrane as a helical span at residues 287–307 (AYTIPIMAFAFVCHPEVLPIY). Residue Asn323 is glycosylated (N-linked (GlcNAc...) asparagine). 5 helical membrane passes run 324-344 (LSIA…YLTF), 366-386 (ILCV…IVLF), 408-428 (VLIA…APNI), 431-451 (IFGI…PAIF), and 469-489 (ILAL…LSFI).

It belongs to the amino acid/polyamine transporter 2 family. Phosphorylation at Ser-52 induces internalization and sequestration into an intracellular reservoir. During dephosphorylation by protein phosphatases, can recycle back to the plasma membrane and regain activity. Prolonged phosphorylation results in its degradation. In terms of tissue distribution, highly expressed in liver. Expressed in skeletal muscle. Expressed in kidney, heart and brain. Not detected in gut, lung or spleen. Expressed ubiquitously in hepatocytes in liver whereas in kidney expression is restricted to the medulla. Within brain, expressed in glial cells. In the cerebellum, expressed on Bergmann glial fibers in the molecular layer and astrocytes in the granule layer. Expressed in brain kidney and liver (at protein level). In the adult kidney, highly expressed in the outer strip of the outer medulla and medullary rays penetrating into the kidney cortex (at protein level).

The protein resides in the cell membrane. It is found in the basolateral cell membrane. It carries out the reaction L-glutamine(out) + Na(+)(out) + H(+)(in) = L-glutamine(in) + Na(+)(in) + H(+)(out). The enzyme catalyses L-asparagine(out) + Na(+)(out) + H(+)(in) = L-asparagine(in) + Na(+)(in) + H(+)(out). The catalysed reaction is L-histidine(out) + Na(+)(out) + H(+)(in) = L-histidine(in) + Na(+)(in) + H(+)(out). With respect to regulation, L-glutamine efflux and L-glutamine uptake are regulated by CO2/HCO3(-) through SLC4A4 leading to modulation of cytosolic pH and Na(+)concentration. Functionally, symporter that cotransports specific neutral amino acids and sodium ions, coupled to an H(+) antiporter activity. Mainly participates in the glutamate-GABA-glutamine cycle in brain where it transports L-glutamine from astrocytes in the intercellular space for the replenishment of both neurotransmitters glutamate and gamma-aminobutyric acid (GABA) in neurons. Also functions as the major influx transporter in ganglion cells mediating the uptake of glutamine. The transport activity is specific for L-glutamine, L-histidine and L-asparagine. The transport is electroneutral coupled to the cotransport of 1 Na(+) and the antiport of 1 H(+), pH dependent, saturable, Li(+) tolerant and functions in both direction depending on the concentration gradients of its substrates and cotransported ions. Also mediates an amino acid-gated H(+) conductance that is not stoichiometrically coupled to the amino acid transport but which influences the ionic gradients that drive the amino acid transport. In addition, may play a role in nitrogen metabolism, amino acid homeostasis, glucose metabolism and renal ammoniagenesis. The protein is Sodium-coupled neutral amino acid transporter 3 of Rattus norvegicus (Rat).